We begin with the raw amino-acid sequence, 830 residues long: Lon protease 3 (830 aa).

One can recognise a Lon N-terminal domain in the interval 19–213 (VPLLPLRDII…RLIELMQAEI (195 aa)). An ATP-binding site is contributed by 367 to 374 (GPPGVGKT). The Lon proteolytic domain maps to 604–784 (RDEVGLVNGL…DDVLREALIL (181 aa)). Active-site residues include Ser690 and Lys733. The span at 811–823 (PVKAPPAAAGEPT) shows a compositional bias: low complexity. The interval 811 to 830 (PVKAPPAAAGEPTPAAPPGA) is disordered.

This sequence belongs to the peptidase S16 family. Homohexamer. Organized in a ring with a central cavity.

It is found in the cytoplasm. It carries out the reaction Hydrolysis of proteins in presence of ATP.. Functionally, ATP-dependent serine protease that mediates the selective degradation of mutant and abnormal proteins as well as certain short-lived regulatory proteins. Required for cellular homeostasis and for survival from DNA damage and developmental changes induced by stress. Degrades polypeptides processively to yield small peptide fragments that are 5 to 10 amino acids long. Binds to DNA in a double-stranded, site-specific manner. This chain is Lon protease 3, found in Sorangium cellulosum (strain So ce56) (Polyangium cellulosum (strain So ce56)).